Consider the following 872-residue polypeptide: DNA mismatch repair protein MutS (872 aa).

602-609 contributes to the ATP binding site; that stretch reads GPNMSGKS.

This sequence belongs to the DNA mismatch repair MutS family.

Its function is as follows. This protein is involved in the repair of mismatches in DNA. It is possible that it carries out the mismatch recognition step. This protein has a weak ATPase activity. This Staphylococcus aureus (strain bovine RF122 / ET3-1) protein is DNA mismatch repair protein MutS.